We begin with the raw amino-acid sequence, 289 residues long: Acetyl-coenzyme A carboxylase carboxyl transferase subunit beta (289 aa).

The CoA carboxyltransferase N-terminal domain maps to leucine 24–alanine 289.

This sequence belongs to the AccD/PCCB family. In terms of assembly, acetyl-CoA carboxylase is a heterohexamer composed of biotin carboxyl carrier protein (AccB), biotin carboxylase (AccC) and two subunits each of ACCase subunit alpha (AccA) and ACCase subunit beta (AccD).

The protein resides in the cytoplasm. It catalyses the reaction N(6)-carboxybiotinyl-L-lysyl-[protein] + acetyl-CoA = N(6)-biotinyl-L-lysyl-[protein] + malonyl-CoA. The protein operates within lipid metabolism; malonyl-CoA biosynthesis; malonyl-CoA from acetyl-CoA: step 1/1. Component of the acetyl coenzyme A carboxylase (ACC) complex. Biotin carboxylase (BC) catalyzes the carboxylation of biotin on its carrier protein (BCCP) and then the CO(2) group is transferred by the transcarboxylase to acetyl-CoA to form malonyl-CoA. The chain is Acetyl-coenzyme A carboxylase carboxyl transferase subunit beta from Beijerinckia indica subsp. indica (strain ATCC 9039 / DSM 1715 / NCIMB 8712).